A 326-amino-acid polypeptide reads, in one-letter code: Protein BCCIP homolog (326 aa).

A disordered region spans residues 37–81; sequence SHPEDCQCSDEDISFDEKQKIPNLPRKGKEEQVSDSSDEEDSQED. S45 bears the Phosphoserine mark. Residues 72 to 81 show a composition bias toward acidic residues; the sequence is SSDEEDSQED.

This sequence belongs to the BCP1 family.

The sequence is that of Protein BCCIP homolog from Arabidopsis thaliana (Mouse-ear cress).